The sequence spans 193 residues: Xanthine phosphoribosyltransferase (193 aa).

Xanthine-binding residues include Leu20 and Thr27. 5-phospho-alpha-D-ribose 1-diphosphate is bound at residue 128 to 132 (ANGQA). Lys156 contacts xanthine.

It belongs to the purine/pyrimidine phosphoribosyltransferase family. Xpt subfamily. In terms of assembly, homodimer.

It is found in the cytoplasm. The catalysed reaction is XMP + diphosphate = xanthine + 5-phospho-alpha-D-ribose 1-diphosphate. It participates in purine metabolism; XMP biosynthesis via salvage pathway; XMP from xanthine: step 1/1. Its function is as follows. Converts the preformed base xanthine, a product of nucleic acid breakdown, to xanthosine 5'-monophosphate (XMP), so it can be reused for RNA or DNA synthesis. The protein is Xanthine phosphoribosyltransferase of Streptococcus pyogenes serotype M5 (strain Manfredo).